We begin with the raw amino-acid sequence, 123 residues long: Protein Wnt-3a (123 aa).

Residue Ser-1 is the site of O-palmitoleoyl serine attachment. Residues Cys-89 and Cys-104 are joined by a disulfide bond. A glycan (N-linked (GlcNAc...) asparagine) is linked at Asn-90.

Belongs to the Wnt family. Disulfide bonds have critical and distinct roles in secretion and activity. Loss of each conserved cysteine results in high molecular weight oxidized Wnt oligomers, which are formed through inter-Wnt disulfide bonding. In terms of processing, palmitoleoylation is required for efficient binding to frizzled receptors. Depalmitoleoylation leads to Wnt signaling pathway inhibition.

It localises to the secreted. It is found in the extracellular space. The protein localises to the extracellular matrix. Its function is as follows. Ligand for members of the frizzled family of seven transmembrane receptors. Functions in the canonical Wnt signaling pathway that results in activation of transcription factors of the TCF/LEF family. Required for normal embryonic mesoderm development and formation of caudal somites. Required for normal morphogenesis of the developing neural tube. The polypeptide is Protein Wnt-3a (WNT3A) (Meleagris gallopavo (Wild turkey)).